The chain runs to 336 residues: Putative transcription factor avaE (336 aa).

The WRKY DNA-binding region spans 32-100 (TATRLNQTTF…VPLDQNESMP (69 aa)).

It localises to the nucleus. Its pathway is secondary metabolite biosynthesis. Functionally, putative transcription factor; part of the cluster that mediates the biosynthesis of a highly modified cyclo-arginine-tryptophan dipeptide (cRW). The sequence is that of Putative transcription factor avaE from Aspergillus versicolor.